An 857-amino-acid polypeptide reads, in one-letter code: Protein sip-5 (857 aa).

Disordered stretches follow at residues 1–81 (MGNA…ARRL), 157–231 (GLPI…FKPT), 384–416 (SESSVNSGSLSPGVASPGGRRRNQSLSANAPNV), 466–517 (FGRR…GNRR), 545–747 (KAEK…PMFN), and 763–857 (HAGK…QVTL). Composition is skewed to basic and acidic residues over residues 7-16 (KESRGDDSGR) and 36-48 (ESSRRNRNTRHDL). Residues 49–61 (TGLLGRAAGGSSS) are compositionally biased toward low complexity. A compositionally biased stretch (basic and acidic residues) spans 62–81 (HADERHERKETKQEREARRL). Polar residues-rich tracts occupy residues 179 to 191 (ASPTDASSNTNHL) and 199 to 208 (SLSTASEHST). Composition is skewed to low complexity over residues 209–230 (SNAGSALPSPGSGKGSSSPFKP), 384–394 (SESSVNSGSLS), and 476–504 (SASATPGNGDENRGTGPATPANAGATANT). Positions 545-572 (KAEKEEQKEAKKREKEREKAEKKAEKAA) are enriched in basic and acidic residues. Composition is skewed to low complexity over residues 586–604 (SRSGHSSASGSSLSLPGLS) and 621–645 (ASVASAMASTGAAMTTPAAPGALAP). Residues 648–657 (STKDKGKAVD) are compositionally biased toward basic and acidic residues. Low complexity predominate over residues 688–697 (SSASSASSSA). Over residues 698 to 712 (VESNQGSYVPPSNLQ) the composition is skewed to polar residues. Residues 783-799 (ETAKSGEGAGEHVEHVL) show a composition bias toward basic and acidic residues. 2 stretches are compositionally biased toward polar residues: residues 800 to 838 (DSQTTGISEQDSEINSQPPRLTVTLDSPATSVGDVSTAS) and 845 to 857 (NETTVEHATQVTL).

It belongs to the SIP5 family.

It is found in the cytoplasm. May negatively regulate the snf-1 kinase. This Neurospora crassa (strain ATCC 24698 / 74-OR23-1A / CBS 708.71 / DSM 1257 / FGSC 987) protein is Protein sip-5 (sip-5).